The chain runs to 130 residues: Vascular-related unknown protein 3 (130 aa).

The interval 45–81 (DDSSMMSDAASPMGCVEEDTASSPSNRTEGYSGMEDN) is disordered.

Functionally, involved in the regulation of plant growth. This is Vascular-related unknown protein 3 from Arabidopsis thaliana (Mouse-ear cress).